A 1556-amino-acid chain; its full sequence is Ubiquitin carboxyl-terminal hydrolase 47 (1556 aa).

The tract at residues 117–231 is disordered; that stretch reads MKSDGEKAKS…AKKTAKVTSK (115 aa). Residues 146-156 are compositionally biased toward low complexity; it reads ASGSSSPSKAK. 2 positions are modified to phosphoserine: serine 172 and serine 173. Residues 180-189 show a composition bias toward low complexity; sequence IKTTAAKISK. The span at 191-200 shows a compositional bias: basic and acidic residues; it reads GSEKAPRASP. The span at 208 to 219 shows a compositional bias: polar residues; sequence TEINSKNTSSES. Phosphoserine is present on serine 238. The USP domain occupies 396–779; that stretch reads VGLVNQAMTC…NAYMLMYRQV (384 aa). The active-site Nucleophile is cysteine 405. 2 stretches are compositionally biased toward polar residues: residues 628–642 and 661–673; these read NRSG…QLNG and LSSG…SSSQ. Residues 628–697 form a disordered region; the sequence is NRSGNSGEQN…SSSTSKSAKQ (70 aa). The segment covering 688-697 has biased composition (low complexity); sequence SSSTSKSAKQ. Residue histidine 720 is the Proton acceptor of the active site. Residues 1087-1148 form a disordered region; the sequence is EPMSQPSPSH…LSSPEDEAAS (62 aa). Residues 1109–1125 are compositionally biased toward basic and acidic residues; sequence DGDRTLVETDNMAHRGG. The segment covering 1128–1141 has biased composition (low complexity); the sequence is SQVSSTSHSPQLSS. Residues serine 1131, serine 1132, serine 1140, serine 1141, serine 1199, serine 1201, and serine 1205 each carry the phosphoserine modification.

Belongs to the peptidase C19 family. In terms of assembly, interacts with ttk.

The protein resides in the nucleus. The catalysed reaction is Thiol-dependent hydrolysis of ester, thioester, amide, peptide and isopeptide bonds formed by the C-terminal Gly of ubiquitin (a 76-residue protein attached to proteins as an intracellular targeting signal).. Its function is as follows. Ubiquitin-specific protease that deubiquitinates target proteins to regulate different cellular and developmental pathways. Functions downstream of Dsor1/MEK to positively regulate the Ras/MAPK signaling pathway. Likely to modulate the pathway during various cellular and developmental processes including rl/MAPK activation by the receptors InR, Egfr and sevenless/sev. Functions in the post-translational stabilization of rl/MAPK levels in a mechanism that is independent of rl activity and opposes the activity of the E2 enzyme Unc6 and the putative E3 ligases poe, Ufd4 and Kcmf1, which mediate the ubiquitination and proteasomal degradation of rl. During eye development it may also act downstream of rl/MAPK to negatively regulate the Ras/MAPK signaling pathway by stabilizing the transcriptional repressor ttk and consequently inhibiting photoreceptor cell development. This suggests that at least during eye development, it may act in both the positive and negative regulation of the Ras/MAPK signaling pathway to mediate the development of different cell types. Positively regulates border follicle cell migration during oogenesis by mediating the deubiquitination and stabilization of slbo. In the wing disks it positively regulates wg signaling by stabilizing arm. Has an effect on position-effect variegation. The polypeptide is Ubiquitin carboxyl-terminal hydrolase 47 (Drosophila melanogaster (Fruit fly)).